The primary structure comprises 77 residues: U8-lycotoxin-Ls1w (77 aa).

Positions 1 to 20 (MKLIIFTGLVLFAIVSLIEA) are cleaved as a signal peptide. Residues 21–26 (QAENEK) constitute a propeptide that is removed on maturation.

Belongs to the neurotoxin 19 (CSTX) family. 08 (U8-Lctx) subfamily. Post-translationally, contains 4 disulfide bonds. In terms of tissue distribution, expressed by the venom gland.

It is found in the secreted. The protein is U8-lycotoxin-Ls1w of Lycosa singoriensis (Wolf spider).